Reading from the N-terminus, the 568-residue chain is Sulfite reductase [NADPH] hemoprotein beta-component (568 aa).

[4Fe-4S] cluster contacts are provided by Cys-425, Cys-431, Cys-470, and Cys-474. Cys-474 lines the siroheme pocket.

This sequence belongs to the nitrite and sulfite reductase 4Fe-4S domain family. In terms of assembly, alpha(8)-beta(8). The alpha component is a flavoprotein, the beta component is a hemoprotein. Requires siroheme as cofactor. [4Fe-4S] cluster serves as cofactor.

The enzyme catalyses hydrogen sulfide + 3 NADP(+) + 3 H2O = sulfite + 3 NADPH + 4 H(+). It functions in the pathway sulfur metabolism; hydrogen sulfide biosynthesis; hydrogen sulfide from sulfite (NADPH route): step 1/1. In terms of biological role, component of the sulfite reductase complex that catalyzes the 6-electron reduction of sulfite to sulfide. This is one of several activities required for the biosynthesis of L-cysteine from sulfate. The sequence is that of Sulfite reductase [NADPH] hemoprotein beta-component from Xanthomonas campestris pv. campestris (strain B100).